Reading from the N-terminus, the 307-residue chain is Porphobilinogen deaminase (307 aa).

An S-(dipyrrolylmethanemethyl)cysteine modification is found at Cys239.

The protein belongs to the HMBS family. Monomer. Dipyrromethane serves as cofactor.

The enzyme catalyses 4 porphobilinogen + H2O = hydroxymethylbilane + 4 NH4(+). Its pathway is porphyrin-containing compound metabolism; protoporphyrin-IX biosynthesis; coproporphyrinogen-III from 5-aminolevulinate: step 2/4. Functionally, tetrapolymerization of the monopyrrole PBG into the hydroxymethylbilane pre-uroporphyrinogen in several discrete steps. In Campylobacter jejuni subsp. jejuni serotype O:6 (strain 81116 / NCTC 11828), this protein is Porphobilinogen deaminase.